Here is a 351-residue protein sequence, read N- to C-terminus: N-acetyl-gamma-glutamyl-phosphate reductase (351 aa).

The active site involves Cys-154.

This sequence belongs to the NAGSA dehydrogenase family. Type 1 subfamily.

It localises to the cytoplasm. It catalyses the reaction N-acetyl-L-glutamate 5-semialdehyde + phosphate + NADP(+) = N-acetyl-L-glutamyl 5-phosphate + NADPH + H(+). It functions in the pathway amino-acid biosynthesis; L-arginine biosynthesis; N(2)-acetyl-L-ornithine from L-glutamate: step 3/4. In terms of biological role, catalyzes the NADPH-dependent reduction of N-acetyl-5-glutamyl phosphate to yield N-acetyl-L-glutamate 5-semialdehyde. This Prochlorococcus marinus (strain MIT 9215) protein is N-acetyl-gamma-glutamyl-phosphate reductase.